The following is a 178-amino-acid chain: Large ribosomal subunit protein uL5 (178 aa).

This sequence belongs to the universal ribosomal protein uL5 family. Part of the 50S ribosomal subunit; part of the 5S rRNA/L5/L18/L25 subcomplex. Contacts the 5S rRNA and the P site tRNA. Forms a bridge to the 30S subunit in the 70S ribosome.

Its function is as follows. This is one of the proteins that bind and probably mediate the attachment of the 5S RNA into the large ribosomal subunit, where it forms part of the central protuberance. In the 70S ribosome it contacts protein S13 of the 30S subunit (bridge B1b), connecting the 2 subunits; this bridge is implicated in subunit movement. Contacts the P site tRNA; the 5S rRNA and some of its associated proteins might help stabilize positioning of ribosome-bound tRNAs. This Prochlorococcus marinus (strain MIT 9515) protein is Large ribosomal subunit protein uL5.